Reading from the N-terminus, the 438-residue chain is Delta(14)-sterol reductase ERG24 (438 aa).

At 1–13 (MVSALNPRTTEFE) the chain is on the lumenal side. A helical transmembrane segment spans residues 14–34 (FGGLIGALGISIGLPVFTIIL). Residues 35–71 (NQMIRPDYFIKGFFQNFDIVELWNGIKPLRYYLGNRE) are Cytoplasmic-facing. The chain crosses the membrane as a helical span at residues 72 to 90 (LWTVYCLWYGILAVLDVIL). Residues 91-109 (PGRVMKGVQLRDGSKLSYK) lie on the Lumenal side of the membrane. A helical membrane pass occupies residues 110 to 127 (INGIAMSTTLVLVLAIRW). Topologically, residues 128 to 147 (KLTDGQLPELQYLYENHVSL) are cytoplasmic. The helical transmembrane segment at 148 to 172 (CIISILFSFFLATYCYVASFIPLIF) threads the bilayer. Over 173–242 (KKNGNGKREK…LHHHYLKTGK (70 aa)) the chain is Lumenal. Residues 243-263 (INDALVLVNFLQGFYIFDGVL) traverse the membrane as a helical segment. At 264–308 (NEEGVLTMMDITTDGFGFMLAFGDLSLVPFTYSLQARYLSVSPVE) the chain is on the cytoplasmic side. The helical transmembrane segment at 309-328 (LGWVKVVGILAIMFLGFHIF) threads the bilayer. Residues 329–368 (HSANKQKSEFRQGKLENLKSIQTKRGTKLLCDGWWAKSQH) are Lumenal-facing. NADP(+)-binding positions include lysine 335, arginine 339, leucine 358, tryptophan 363, 370-371 (NY), aspartate 410, 414-418 (CRLKY), and tyrosine 425. The helical transmembrane segment at 369 to 387 (INYFGDWLISLSWCLATWF) threads the bilayer. Over 388-438 (QTPLTYYYSLYFATLLLHRQQRDEHKCRLKYGENWEEYERKVPYKIIPYVY) the chain is Cytoplasmic.

It belongs to the ERG4/ERG24 family.

The protein localises to the membrane. It carries out the reaction 4,4-dimethyl-5alpha-cholesta-8,24-dien-3beta-ol + NADP(+) = 4,4-dimethyl-5alpha-cholesta-8,14,24-trien-3beta-ol + NADPH + H(+). Its pathway is steroid biosynthesis; zymosterol biosynthesis; zymosterol from lanosterol: step 2/6. With respect to regulation, inhibited by the morpholine antifungal drug fenpropimorph. In terms of biological role, delta(14)-sterol reductase; part of the third module of ergosterol biosynthesis pathway that includes the late steps of the pathway. ERG24 reduces the C14=C15 double bond of 4,4-dimethyl-cholesta-8,14,24-trienol to produce 4,4-dimethyl-cholesta-8,24-dienol. The third module or late pathway involves the ergosterol synthesis itself through consecutive reactions that mainly occur in the endoplasmic reticulum (ER) membrane. Firstly, the squalene synthase ERG9 catalyzes the condensation of 2 farnesyl pyrophosphate moieties to form squalene, which is the precursor of all steroids. Squalene synthase is crucial for balancing the incorporation of farnesyl diphosphate (FPP) into sterol and nonsterol isoprene synthesis. Secondly, the squalene epoxidase ERG1 catalyzes the stereospecific oxidation of squalene to (S)-2,3-epoxysqualene, which is considered to be a rate-limiting enzyme in steroid biosynthesis. Then, the lanosterol synthase ERG7 catalyzes the cyclization of (S)-2,3 oxidosqualene to lanosterol, a reaction that forms the sterol core. In the next steps, lanosterol is transformed to zymosterol through a complex process involving various demethylation, reduction and desaturation reactions. The lanosterol 14-alpha-demethylase ERG11 (also known as CYP51) catalyzes C14-demethylation of lanosterol to produce 4,4'-dimethyl cholesta-8,14,24-triene-3-beta-ol, which is critical for ergosterol biosynthesis. The C-14 reductase ERG24 reduces the C14=C15 double bond of 4,4-dimethyl-cholesta-8,14,24-trienol to produce 4,4-dimethyl-cholesta-8,24-dienol. 4,4-dimethyl-cholesta-8,24-dienol is substrate of the C-4 demethylation complex ERG25-ERG26-ERG27 in which ERG25 catalyzes the three-step monooxygenation required for the demethylation of 4,4-dimethyl and 4alpha-methylsterols, ERG26 catalyzes the oxidative decarboxylation that results in a reduction of the 3-beta-hydroxy group at the C-3 carbon to an oxo group, and ERG27 is responsible for the reduction of the keto group on the C-3. ERG28 has a role as a scaffold to help anchor ERG25, ERG26 and ERG27 to the endoplasmic reticulum and ERG29 regulates the activity of the iron-containing C4-methylsterol oxidase ERG25. Then, the sterol 24-C-methyltransferase ERG6 catalyzes the methyl transfer from S-adenosyl-methionine to the C-24 of zymosterol to form fecosterol. The C-8 sterol isomerase ERG2 catalyzes the reaction which results in unsaturation at C-7 in the B ring of sterols and thus converts fecosterol to episterol. The sterol-C5-desaturase ERG3 then catalyzes the introduction of a C-5 double bond in the B ring to produce 5-dehydroepisterol. The C-22 sterol desaturase ERG5 further converts 5-dehydroepisterol into ergosta-5,7,22,24(28)-tetraen-3beta-ol by forming the C-22(23) double bond in the sterol side chain. Finally, ergosta-5,7,22,24(28)-tetraen-3beta-ol is substrate of the C-24(28) sterol reductase ERG4 to produce ergosterol. The sequence is that of Delta(14)-sterol reductase ERG24 from Saccharomyces cerevisiae (strain ATCC 204508 / S288c) (Baker's yeast).